The sequence spans 429 residues: Ribosomal RNA small subunit methyltransferase B (429 aa).

Residues Cys254 to Lys260, Asp277, Asp303, and Asp322 contribute to the S-adenosyl-L-methionine site. Cys375 (nucleophile) is an active-site residue. Positions Ala397–Asp419 are disordered. A compositionally biased stretch (polar residues) spans Glu400–Leu412.

The protein belongs to the class I-like SAM-binding methyltransferase superfamily. RsmB/NOP family.

Its subcellular location is the cytoplasm. The catalysed reaction is cytidine(967) in 16S rRNA + S-adenosyl-L-methionine = 5-methylcytidine(967) in 16S rRNA + S-adenosyl-L-homocysteine + H(+). In terms of biological role, specifically methylates the cytosine at position 967 (m5C967) of 16S rRNA. This Salmonella choleraesuis (strain SC-B67) protein is Ribosomal RNA small subunit methyltransferase B.